We begin with the raw amino-acid sequence, 379 residues long: Nucleosome assembly protein 1;2 (379 aa).

Residues 26–80 (VNALKNKLQNLAGQHSDVLENLTPPVRKRVEFLREIQNQYDEMEAKFFEERAALE) adopt a coiled-coil conformation. Serine 41 is subject to Phosphoserine. Residues 47–62 (LTPPVRKRVEFLREIQ) carry the Nuclear export signal motif. A Nuclear localization signal motif is present at residues 222 to 227 (KKKPKK). The disordered stretch occupies residues 298–379 (AVEADDLDIE…GERPPECKQQ (82 aa)). Residues 299–342 (VEADDLDIEDDDDEIDEDDDEEDEEDDEDDEEEDDEDDDEEEEA) show a composition bias toward acidic residues. A compositionally biased stretch (basic residues) spans 347–360 (KSKKKSSAGHKKAG). The residue at position 376 (cysteine 376) is a Cysteine methyl ester. The S-farnesyl cysteine moiety is linked to residue cysteine 376. The propeptide at 377 to 379 (KQQ) is removed in mature form.

Belongs to the nucleosome assembly protein (NAP) family. In terms of assembly, can form homomeric and heteromeric protein complexes with NAP1;1, NAP1;3 and NAP1;4. Binds histone H2A. Ubiquitous.

Its subcellular location is the nucleus. The protein resides in the cytoplasm. Its function is as follows. May modulate chromatin structure by regulation of nucleosome assembly/disassembly. May function in nucleotide excision repair (NER). Involved in somatic homologous recombination. The chain is Nucleosome assembly protein 1;2 (NAP1;2) from Arabidopsis thaliana (Mouse-ear cress).